We begin with the raw amino-acid sequence, 353 residues long: UDP-galactose transporter (353 aa).

Helical transmembrane passes span 147-167, 184-204, 215-235, 254-274, 279-299, and 302-322; these read LGPMKWFSLFLLTGGIAIVQL, VTGFSAVLVACLISGLAGVYF, LWVRNVQLSFFSLFPCLFTIL, IVWLAILLQAGGGIIVALCVA, IMKNFSTSISIIISSLASVYL, and FKISLTFLIGVMLVIAATFLY. The disordered stretch occupies residues 325–353; sequence PESKPSPSRGTYIPMTTQDAAAKDVDHKH. Over residues 329 to 343 the composition is skewed to polar residues; it reads PSPSRGTYIPMTTQD.

This sequence belongs to the nucleotide-sugar transporter family. SLC35A subfamily.

Its subcellular location is the golgi apparatus membrane. Functionally, essential for the transport of UDP-galactose into the lumen of Golgi apparatus. In Schizosaccharomyces pombe (strain 972 / ATCC 24843) (Fission yeast), this protein is UDP-galactose transporter (gms1).